Here is a 73-residue protein sequence, read N- to C-terminus: RNA-binding protein Hfq (73 aa).

The Sm domain maps to 8-68 (DQFLNQIRKD…ISTFAPQKNV (61 aa)).

It belongs to the Hfq family. Homohexamer.

RNA chaperone that binds small regulatory RNA (sRNAs) and mRNAs to facilitate mRNA translational regulation in response to envelope stress, environmental stress and changes in metabolite concentrations. Also binds with high specificity to tRNAs. In Bacillus pumilus (strain SAFR-032), this protein is RNA-binding protein Hfq.